The chain runs to 1367 residues: Collagen alpha-1(XV) chain (1367 aa).

A signal peptide spans 1 to 31; sequence MTHRRTAQGRRPRWLLSIISALLSAVLQTRA. The 196-residue stretch at 54–249 folds into the Laminin G-like domain; the sequence is SVSFTTGYGG…SSASGEASGF (196 aa). The segment at 229–604 is nonhelical region 1 (NC1); the sequence is RTPEELCEAQ…DIVGNEDLLR (376 aa). O-linked (Xyl...) (chondroitin sulfate) serine glycosylation is found at Ser-243 and Ser-247. Positions 267 to 319 are disordered; it reads APPKESHVDPISVPPTSSSPAEDSELSGEPVPEGTPETNLSIIGHSSPEQGSG. N-linked (GlcNAc...) asparagine glycosylation is found at Asn-305 and Asn-323. The O-linked (Xyl...) (chondroitin sulfate) serine glycan is linked to Ser-341. Asn-348, Asn-375, and Asn-402 each carry an N-linked (GlcNAc...) asparagine glycan. Disordered stretches follow at residues 396–446 and 529–784; these read DTPD…SHGE and TAEP…GHVE. The span at 402 to 429 shows a compositional bias: polar residues; that stretch reads NLTTTASGDGEVPTSTDGDTEADSSPTG. Over residues 434–446 the composition is skewed to basic and acidic residues; the sequence is KPREEATLGSHGE. The span at 555–564 shows a compositional bias: pro residues; it reads PSGPPLPTPT. Gly residues predominate over residues 582 to 595; it reads GPVGGLDEGSGSGD. Collagen-like domains are found at residues 605-665 and 666-717; these read GPPG…GMKG and EKGA…PPGP. Residues 605–718 form a triple-helical region 1 (COL1) region; it reads GPPGPPGPPG…PGPPGPPGPG (114 aa). The segment covering 606 to 616 has biased composition (pro residues); sequence PPGPPGPPGSP. Asn-673 is a glycosylation site (N-linked (GlcNAc...) asparagine). Residues 703–717 are compositionally biased toward pro residues; it reads MGPPGPPGPPGPPGP. Positions 719 to 748 are nonhelical region 2 (NC2); it reads CTTELGFEIEGSGDVRLLSKPTISGPTSPS. An O-linked (Xyl...) (chondroitin sulfate) serine glycan is attached at Ser-730. Residues 737 to 750 are compositionally biased toward low complexity; sequence SKPTISGPTSPSGP. The segment at 749–783 is triple-helical region 2 (COL2); that stretch reads GPKGEKGEQGAKGERGADGTSTMGPPGPRGPPGHV. A compositionally biased stretch (basic and acidic residues) spans 751-765; that stretch reads KGEKGEQGAKGERGA. The interval 784 to 807 is nonhelical region 3 (NC3); the sequence is EVLSSSLINITNGSMNFSDIPELM. Residues Asn-792, Asn-795, and Asn-799 are each glycosylated (N-linked (GlcNAc...) asparagine). 2 consecutive Collagen-like domains span residues 808 to 850 and 863 to 912; these read GPPG…GEPG and KGRK…GDRG. Residues 808–852 form a triple-helical region 3 (COL3) region; sequence GPPGPDGVPGLPGFPGPRGPKGDTGVPGFPGLKGEQGEKGEPGAI. The nonhelical region 4 (NC4) stretch occupies residues 853–863; sequence LTGDVPLEMMK. The triple-helical region 4 (COL4) stretch occupies residues 864-934; sequence GRKGEPGIHG…PGPPGPPGAV (71 aa). Residues 905-930 are disordered; sequence KGAKGDRGVTLPGPPGLPGPPGPPGP. Positions 916–930 are enriched in pro residues; it reads PGPPGLPGPPGPPGP. Residues 935–968 form a nonhelical region 5 (NC5) region; the sequence is VNIKGAVFPIPARPHCKTPVGTAHPGDPELVTFH. Residues 969-998 form a triple-helical region 5 (COL5) region; that stretch reads GVKGEKGSWGLPGSKGEKGDQGAQGPPGPP. Disordered stretches follow at residues 974–1000 and 1055–1089; these read KGSW…PPVD and GPPG…PAIL. The nonhelical region 6 (NC6) stretch occupies residues 999–1031; that stretch reads VDPAYLRHFLNSLKGENEDASFRGESSNNLFVS. The segment at 1032 to 1086 is triple-helical region 6 (COL6); that stretch reads GPPGLPGYPGLVGQKGEAVVGPQGPPGIPGLPGPPGFGRPGVPGPPGPPGPPGPP. A compositionally biased stretch (pro residues) spans 1055–1086; sequence GPPGIPGLPGPPGFGRPGVPGPPGPPGPPGPP. The nonhelical region 7 (NC7) stretch occupies residues 1087 to 1096; it reads AILGAAVALP. Residues 1097 to 1111 are triple-helical region 7 (COL7); sequence GPPGPPGQPGLPGSR. The interval 1112 to 1367 is nonhelical region 8 (NC8); the sequence is NLVTALSDMG…ENSFMTDTRK (256 aa). Intrachain disulfides connect Cys-1216–Cys-1356 and Cys-1318–Cys-1348.

The protein belongs to the multiplexin collagen family. In terms of assembly, trimer; disulfide-linked. As to quaternary structure, interacts moderately with EFEMP2. Prolines at the third position of the tripeptide repeating unit (G-X-Y) are hydroxylated in some or all of the chains. In terms of processing, O-glycosylated; contains chondroitin sulfate. As to expression, detected in testis, brain, heart, kidney, skeletal muscle and skin (at protein level). Detected in heart and skeletal muscle.

It localises to the secreted. Its subcellular location is the extracellular space. It is found in the extracellular matrix. Functionally, structural protein that stabilizes microvessels and muscle cells, both in heart and in skeletal muscle. Its function is as follows. Restin potently inhibits angiogenesis. This chain is Collagen alpha-1(XV) chain (Col15a1), found in Mus musculus (Mouse).